An 83-amino-acid chain; its full sequence is Small ribosomal subunit protein bS16 (83 aa).

This sequence belongs to the bacterial ribosomal protein bS16 family.

This is Small ribosomal subunit protein bS16 from Verminephrobacter eiseniae (strain EF01-2).